Here is a 240-residue protein sequence, read N- to C-terminus: Dihydromonapterin reductase (240 aa).

Y152 acts as the Proton acceptor in catalysis.

The protein belongs to the short-chain dehydrogenases/reductases (SDR) family. FolM subfamily.

The catalysed reaction is (6S)-5,6,7,8-tetrahydrofolate + NADP(+) = 7,8-dihydrofolate + NADPH + H(+). The enzyme catalyses 7,8-dihydromonapterin + NADPH + H(+) = 5,6,7,8-tetrahydromonapterin + NADP(+). Catalyzes the reduction of dihydromonapterin to tetrahydromonapterin. Also has lower activity with dihydrofolate. In Shigella sonnei (strain Ss046), this protein is Dihydromonapterin reductase (folM).